An 85-amino-acid chain; its full sequence is Small ribosomal subunit protein uS17 (85 aa).

Belongs to the universal ribosomal protein uS17 family. As to quaternary structure, part of the 30S ribosomal subunit.

Functionally, one of the primary rRNA binding proteins, it binds specifically to the 5'-end of 16S ribosomal RNA. This Lachnospira eligens (strain ATCC 27750 / DSM 3376 / VPI C15-48 / C15-B4) (Eubacterium eligens) protein is Small ribosomal subunit protein uS17.